The sequence spans 322 residues: Probable ethanolamine-phosphate cytidylyltransferase (322 aa).

The protein belongs to the cytidylyltransferase family.

It catalyses the reaction phosphoethanolamine + CTP + H(+) = CDP-ethanolamine + diphosphate. It participates in phospholipid metabolism; phosphatidylethanolamine biosynthesis; phosphatidylethanolamine from ethanolamine: step 2/3. This Encephalitozoon cuniculi (strain GB-M1) (Microsporidian parasite) protein is Probable ethanolamine-phosphate cytidylyltransferase (MUQ1).